An 871-amino-acid chain; its full sequence is Coatomer subunit gamma-2 (871 aa).

Residues 1–11 (MIKKFDKKDEE) are compositionally biased toward basic and acidic residues. The interval 1 to 21 (MIKKFDKKDEESGSGSNPFQH) is disordered. HEAT repeat units lie at residues 64-101 (TEAT…ISED), 283-320 (RELA…KHPS), 321-355 (AVTA…GSES), 356-392 (SVDR…KYPR), 395-430 (SVMM…ENPE), and 467-504 (PVPS…QNES). The residue at position 594 (T594) is a Phosphothreonine.

It belongs to the COPG family. As to quaternary structure, oligomeric complex. Binds to CDC42. Interacts with JAGN1. Interacts with TMED10 (via cytoplasmic domain).

The protein resides in the cytoplasm. It is found in the cytosol. The protein localises to the golgi apparatus membrane. Its subcellular location is the cytoplasmic vesicle. It localises to the COPI-coated vesicle membrane. Functionally, the coatomer is a cytosolic protein complex that binds to dilysine motifs and reversibly associates with Golgi non-clathrin-coated vesicles, which further mediate biosynthetic protein transport from the ER, via the Golgi up to the trans Golgi network. Coatomer complex is required for budding from Golgi membranes, and is essential for the retrograde Golgi-to-ER transport of dilysine-tagged proteins. In mammals, the coatomer can only be recruited by membranes associated to ADP-ribosylation factors (ARFs), which are small GTP-binding proteins; the complex also influences the Golgi structural integrity, as well as the processing, activity, and endocytic recycling of LDL receptors. This is Coatomer subunit gamma-2 (COPG2) from Homo sapiens (Human).